Here is a 186-residue protein sequence, read N- to C-terminus: dCTP deaminase (186 aa).

107–112 (KSTYAR) contacts dCTP. Glu-133 serves as the catalytic Proton donor/acceptor. 3 residues coordinate dCTP: Gln-152, Tyr-166, and Gln-176.

The protein belongs to the dCTP deaminase family. Homotrimer.

The catalysed reaction is dCTP + H2O + H(+) = dUTP + NH4(+). It functions in the pathway pyrimidine metabolism; dUMP biosynthesis; dUMP from dCTP (dUTP route): step 1/2. Catalyzes the deamination of dCTP to dUTP. In Campylobacter curvus (strain 525.92), this protein is dCTP deaminase.